A 227-amino-acid polypeptide reads, in one-letter code: Ion-translocating oxidoreductase complex subunit E (227 aa).

A run of 6 helical transmembrane segments spans residues Ala-18 to Ala-38, Leu-39 to Val-59, Ile-69 to Ala-89, Gly-93 to Gly-113, Leu-125 to Leu-145, and His-182 to Leu-202.

This sequence belongs to the NqrDE/RnfAE family. In terms of assembly, the complex is composed of six subunits: RnfA, RnfB, RnfC, RnfD, RnfE and RnfG.

The protein localises to the cell inner membrane. Functionally, part of a membrane-bound complex that couples electron transfer with translocation of ions across the membrane. The polypeptide is Ion-translocating oxidoreductase complex subunit E (Aliivibrio fischeri (strain MJ11) (Vibrio fischeri)).